Consider the following 347-residue polypeptide: NADH-ubiquinone oxidoreductase chain 2 (347 aa).

The next 11 membrane-spanning stretches (helical) occupy residues 2 to 22 (SPYVLTIMSFSLLLGTTMTLI), 25 to 45 (HWLTAWMGLEINTLAIIPLMT), 56 to 76 (AIKYFMIQATASMIILFSAIF), 96 to 116 (FMMTIALAMKLGLAPFHFWVP), 122 to 142 (IPLLSGMLLLTWQKIAPISIF), 149 to 169 (LNMSLLMILSITSTLLGGWGG), 178 to 197 (ILAYSSIAHMGWMAIIIMIY), 202 to 219 (ILNLILYLASTITMFMVL), 241 to 261 (MIIITLTLLSLGGLPPLTGFM), 278 to 298 (LAMMLALSTLLNLFFYMRIIY), and 326 to 346 (IPTLTIISSLLLPMTPVFITL).

Belongs to the complex I subunit 2 family.

The protein resides in the mitochondrion inner membrane. It carries out the reaction a ubiquinone + NADH + 5 H(+)(in) = a ubiquinol + NAD(+) + 4 H(+)(out). Its function is as follows. Core subunit of the mitochondrial membrane respiratory chain NADH dehydrogenase (Complex I) that is believed to belong to the minimal assembly required for catalysis. Complex I functions in the transfer of electrons from NADH to the respiratory chain. The immediate electron acceptor for the enzyme is believed to be ubiquinone. In Didelphis virginiana (North American opossum), this protein is NADH-ubiquinone oxidoreductase chain 2 (MT-ND2).